A 464-amino-acid chain; its full sequence is NADH dehydrogenase [ubiquinone] flavoprotein 1, mitochondrial (464 aa).

The transit peptide at 1–20 (MLAARHFLGGLVPVRVSVRF) directs the protein to the mitochondrion. K81 carries the N6-acetyllysine; alternate modification. K81 bears the N6-succinyllysine; alternate mark. 87 to 96 (GRGGAGFPTG) provides a ligand contact to NADH. K104 carries the post-translational modification N6-acetyllysine. FMN is bound at residue 199 to 247 (RGAGAYICGEETALIESIEGKQGKPRLKPPFPADVGVFGCPTTVANVET). R257 carries the omega-N-methylarginine modification. At K375 the chain carries N6-acetyllysine. Positions 379, 382, 385, and 425 each coordinate [4Fe-4S] cluster.

The protein belongs to the complex I 51 kDa subunit family. As to quaternary structure, core subunit of respiratory chain NADH dehydrogenase (Complex I) which is composed of 45 different subunits. This is a component of the flavoprotein-sulfur (FP) fragment of the enzyme. Interacts with RAB5IF. FMN serves as cofactor. It depends on [4Fe-4S] cluster as a cofactor.

The protein localises to the mitochondrion inner membrane. It carries out the reaction a ubiquinone + NADH + 5 H(+)(in) = a ubiquinol + NAD(+) + 4 H(+)(out). Functionally, core subunit of the mitochondrial membrane respiratory chain NADH dehydrogenase (Complex I) which catalyzes electron transfer from NADH through the respiratory chain, using ubiquinone as an electron acceptor. Part of the peripheral arm of the enzyme, where the electrons from NADH are accepted by flavin mononucleotide (FMN) and then passed along a chain of iron-sulfur clusters by electron tunnelling to the final acceptor ubiquinone. Contains FMN, which is the initial electron acceptor as well as one iron-sulfur cluster. The protein is NADH dehydrogenase [ubiquinone] flavoprotein 1, mitochondrial of Mus musculus (Mouse).